Here is an 88-residue protein sequence, read N- to C-terminus: Stannin (88 aa).

Over 1-10 the chain is Mitochondrial intermembrane; it reads MSIMDHSPTT. A helical membrane pass occupies residues 11-31; that stretch reads GVVTVIVILIAIAALGALILG. The Cytoplasmic portion of the chain corresponds to 32 to 88; that stretch reads CWCYLRLQRISQSEDEESIVGDGETKEPFLLVQYSAKGPCVERKAKLMTANSPEVHG. Phosphoserine occurs at positions 49 and 83.

This sequence belongs to the stannin family. Monomer.

The protein resides in the mitochondrion outer membrane. In terms of biological role, plays a role in the toxic effects of organotins. Plays a role in endosomal maturation. In Mus musculus (Mouse), this protein is Stannin (Snn).